Consider the following 354-residue polypeptide: Glutamine synthetase (354 aa).

One can recognise a GS beta-grasp domain in the interval 22-101 (VQAEYVWIDG…VLAETFNNDG (80 aa)). In terms of domain architecture, GS catalytic spans 108–354 (HRHHTKKVMD…IIVETTVLDK (247 aa)).

It belongs to the glutamine synthetase family. In terms of assembly, homooctamer.

It is found in the cytoplasm. It catalyses the reaction L-glutamate + NH4(+) + ATP = L-glutamine + ADP + phosphate + H(+). This is Glutamine synthetase (GLNA) from Suillus bovinus (Jersey cow bolete).